Consider the following 117-residue polypeptide: Large ribosomal subunit protein uL18 (117 aa).

The protein belongs to the universal ribosomal protein uL18 family. In terms of assembly, part of the 50S ribosomal subunit; part of the 5S rRNA/L5/L18/L25 subcomplex. Contacts the 5S and 23S rRNAs.

Its function is as follows. This is one of the proteins that bind and probably mediate the attachment of the 5S RNA into the large ribosomal subunit, where it forms part of the central protuberance. The chain is Large ribosomal subunit protein uL18 from Actinobacillus succinogenes (strain ATCC 55618 / DSM 22257 / CCUG 43843 / 130Z).